Consider the following 1133-residue polypeptide: Eukaryotic translation initiation factor 3 subunit A (1133 aa).

Residues 317-498 enclose the PCI domain; the sequence is IQRMTSHVLI…HCVHFGTDLS (182 aa). Coiled coils occupy residues 573–700 and 784–886; these read KKIE…YFER and EEER…EADS. Residues 810–893 show a composition bias toward basic and acidic residues; the sequence is KEEERRRAEE…ADSWRDRRGG (84 aa). Positions 810–1133 are disordered; the sequence is KEEERRRAEE…DGWTDVKHHR (324 aa). The segment covering 895 to 909 has biased composition (low complexity); the sequence is APAAAAQPNPAAQEA. Basic and acidic residues-rich tracts occupy residues 920–944, 954–1081, and 1097–1117; these read GARE…RDVR, VERR…DSAW, and TRQD…KEAR.

It belongs to the eIF-3 subunit A family. Component of the eukaryotic translation initiation factor 3 (eIF-3) complex.

The protein resides in the cytoplasm. Functionally, RNA-binding component of the eukaryotic translation initiation factor 3 (eIF-3) complex, which is involved in protein synthesis of a specialized repertoire of mRNAs and, together with other initiation factors, stimulates binding of mRNA and methionyl-tRNAi to the 40S ribosome. The eIF-3 complex specifically targets and initiates translation of a subset of mRNAs involved in cell proliferation. This chain is Eukaryotic translation initiation factor 3 subunit A, found in Aedes aegypti (Yellowfever mosquito).